The sequence spans 418 residues: Probable carboxypeptidase AFLA_000940 (418 aa).

A signal peptide spans 1–18 (MKATDLFHVTVLVAGALA). The N-linked (GlcNAc...) asparagine glycan is linked to Asn74. Asp147 provides a ligand contact to Zn(2+). The N-linked (GlcNAc...) asparagine glycan is linked to Asn168. Residue Glu179 is the Proton acceptor of the active site. Position 180 (Glu180) interacts with Zn(2+).

It belongs to the peptidase M20A family. It depends on Zn(2+) as a cofactor.

It localises to the secreted. The chain is Probable carboxypeptidase AFLA_000940 from Aspergillus flavus (strain ATCC 200026 / FGSC A1120 / IAM 13836 / NRRL 3357 / JCM 12722 / SRRC 167).